The following is a 312-amino-acid chain: Ribosomal RNA small subunit methyltransferase H (312 aa).

S-adenosyl-L-methionine is bound by residues 35 to 37 (GGH), Asp55, Phe79, Asp101, and Gln108. The disordered stretch occupies residues 286–306 (LKPSEHEVNENSRSRSSVLRV). A compositionally biased stretch (basic and acidic residues) spans 287–298 (KPSEHEVNENSR).

This sequence belongs to the methyltransferase superfamily. RsmH family.

It localises to the cytoplasm. The catalysed reaction is cytidine(1402) in 16S rRNA + S-adenosyl-L-methionine = N(4)-methylcytidine(1402) in 16S rRNA + S-adenosyl-L-homocysteine + H(+). In terms of biological role, specifically methylates the N4 position of cytidine in position 1402 (C1402) of 16S rRNA. The chain is Ribosomal RNA small subunit methyltransferase H from Aeromonas hydrophila subsp. hydrophila (strain ATCC 7966 / DSM 30187 / BCRC 13018 / CCUG 14551 / JCM 1027 / KCTC 2358 / NCIMB 9240 / NCTC 8049).